The sequence spans 760 residues: 5-methyltetrahydropteroyltriglutamate--homocysteine methyltransferase (760 aa).

5-methyltetrahydropteroyltri-L-glutamate contacts are provided by residues 17 to 20 (RELK) and Lys118. Residues 436-438 (IGS) and Glu489 contribute to the L-homocysteine site. Residues 436–438 (IGS) and Glu489 contribute to the L-methionine site. Residues 520–521 (RC) and Trp566 contribute to the 5-methyltetrahydropteroyltri-L-glutamate site. L-homocysteine is bound at residue Asp604. Asp604 is a binding site for L-methionine. Glu610 contacts 5-methyltetrahydropteroyltri-L-glutamate. Residues His646, Cys648, and Glu670 each contribute to the Zn(2+) site. Catalysis depends on His699, which acts as the Proton donor. Position 731 (Cys731) interacts with Zn(2+).

It belongs to the vitamin-B12 independent methionine synthase family. It depends on Zn(2+) as a cofactor.

The enzyme catalyses 5-methyltetrahydropteroyltri-L-glutamate + L-homocysteine = tetrahydropteroyltri-L-glutamate + L-methionine. The protein operates within amino-acid biosynthesis; L-methionine biosynthesis via de novo pathway; L-methionine from L-homocysteine (MetE route): step 1/1. Functionally, catalyzes the transfer of a methyl group from 5-methyltetrahydrofolate to homocysteine resulting in methionine formation. The sequence is that of 5-methyltetrahydropteroyltriglutamate--homocysteine methyltransferase from Vibrio parahaemolyticus serotype O3:K6 (strain RIMD 2210633).